The chain runs to 3469 residues: Abnormal spindle-like microcephaly-associated protein homolog (3469 aa).

Residues 1 to 24 (MATRRAGRSWEVSPSGPRPAAGEA) are disordered. Residues 13–24 (SPSGPRPAAGEA) show a composition bias toward low complexity. A phosphoserine mark is found at S273, S276, S361, S386, S420, and S599. The 137-residue stretch at 913 to 1049 (KTSKDILLAF…LLWKIAFAFQ (137 aa)) folds into the Calponin-homology (CH) 1 domain. Residues 1050–1069 (VDISLNLDQLKEEIDFLKHT) are a coiled coil. Phosphoserine is present on S1095. The Calponin-homology (CH) 2 domain occupies 1102 to 1253 (SESIKLLMEW…YLSFLCSRLL (152 aa)). IQ domains lie at 1258-1287 (ETRA…QDKA), 1339-1370 (QNES…IILQ), 1385-1414 (YLWA…MLKS), 1529-1560 (KRAA…VLQS), 1574-1605 (LKKI…LVIQ), 1624-1653 (TRSA…SIIK), 1647-1676 (ILTS…ATVK), 1720-1749 (MRES…AAIS), 1743-1774 (QRQA…LVIQ), 1793-1822 (VKRA…AALK), 1816-1845 (QSIA…STIK), 1866-1895 (TRAA…AAVR), 1889-1920 (ERQA…LVIQ), 1939-1970 (LREA…VIIQ), 1962-1993 (QHKC…RLIQ), 2012-2041 (TKAA…AAVT), 2035-2066 (CNRA…IIIQ), 2085-2116 (LKKT…TVIQ), 2108-2139 (LHMA…VIIQ), 2158-2189 (IMKA…TLIQ), 2181-2210 (MQSA…VTRT), 2231-2262 (LRHS…TLIQ), 2304-2333 (VQKA…AATA), 2327-2358 (VHRA…VVIQ), 2377-2408 (QRHS…TLIQ), 2400-2431 (MHSS…VFVQ), 2450-2481 (LKKA…VLIQ), 2523-2554 (QRRS…IIIQ), 2681-2712 (RHLA…AVIQ), 2731-2762 (VQKS…MVAS), 2851-2882 (QKRA…VVLQ), 2901-2930 (IRSS…STIK), 2924-2955 (IKDS…KIQA), 2946-2977 (QVKA…KIIQ), 3021-3050 (RHQA…AALT), 3071-3102 (LKKS…RLLH), 3173-3202 (QNRA…AISR), and 3196-3227 (FNNA…IRLS).

The protein localises to the cytoplasm. Its subcellular location is the cytoskeleton. It is found in the spindle. The protein resides in the nucleus. Functionally, probable role in mitotic spindle regulation and coordination of mitotic processes. May have a preferential role in regulating neurogenesis. The polypeptide is Abnormal spindle-like microcephaly-associated protein homolog (ASPM) (Canis lupus familiaris (Dog)).